A 190-amino-acid chain; its full sequence is Threonylcarbamoyl-AMP synthase (190 aa).

The YrdC-like domain maps to 7-190; the sequence is TGSIAAVVDL…ALTGELFRQG (184 aa).

Belongs to the SUA5 family. TsaC subfamily.

It is found in the cytoplasm. It catalyses the reaction L-threonine + hydrogencarbonate + ATP = L-threonylcarbamoyladenylate + diphosphate + H2O. In terms of biological role, required for the formation of a threonylcarbamoyl group on adenosine at position 37 (t(6)A37) in tRNAs that read codons beginning with adenine. Catalyzes the conversion of L-threonine, HCO(3)(-)/CO(2) and ATP to give threonylcarbamoyl-AMP (TC-AMP) as the acyladenylate intermediate, with the release of diphosphate. The protein is Threonylcarbamoyl-AMP synthase of Salmonella paratyphi A (strain ATCC 9150 / SARB42).